Reading from the N-terminus, the 582-residue chain is V-type ATP synthase alpha chain (582 aa).

231–238 is an ATP binding site; that stretch reads GPFGSGKT.

Belongs to the ATPase alpha/beta chains family.

It carries out the reaction ATP + H2O + 4 H(+)(in) = ADP + phosphate + 5 H(+)(out). In terms of biological role, produces ATP from ADP in the presence of a proton gradient across the membrane. The V-type alpha chain is a catalytic subunit. The sequence is that of V-type ATP synthase alpha chain from Deinococcus geothermalis (strain DSM 11300 / CIP 105573 / AG-3a).